Consider the following 747-residue polypeptide: Myotubularin-related protein 12 (747 aa).

The Myotubularin phosphatase domain occupies 205–643 (FDTPKDWCWE…PEIKVWAQRY (439 aa)). The interaction with MTM1 stretch occupies residues 449-558 (VPIFLLFLDC…RGQQKGSRFK (110 aa)). Residues 548-575 (DRGQQKGSRFKHQRQLSLPLTQSKSSPK) form a disordered region. The span at 562 to 572 (QLSLPLTQSKS) shows a compositional bias: polar residues. Phosphoserine occurs at positions 564 and 601.

The protein belongs to the protein-tyrosine phosphatase family. Non-receptor class myotubularin subfamily. In terms of assembly, heterodimer with lipid phosphatase MTM1. Heterodimer with lipid phosphatase MTMR2. In terms of tissue distribution, expressed in skeletal muscles (at protein level).

It localises to the cytoplasm. The protein resides in the sarcoplasmic reticulum. Its subcellular location is the myofibril. The protein localises to the sarcomere. Functionally, acts as an adapter for the myotubularin-related phosphatases. Regulates phosphatase MTM1 protein stability and possibly its intracellular location. By stabilizing MTM1 protein levels, required for skeletal muscle maintenance but not for myogenesis. This chain is Myotubularin-related protein 12 (Mtmr12), found in Mus musculus (Mouse).